A 476-amino-acid polypeptide reads, in one-letter code: Protein transport protein SEC61 subunit alpha (476 aa).

Residues 1-33 lie on the Cytoplasmic side of the membrane; that stretch reads MSSLRFLDLVKPFVPFLPEVQQPETKIPFNQKL. The helical transmembrane segment at 34–54 threads the bilayer; sequence MWTGLTLLIFLVMSQMPLYGI. Residues 55–76 are Lumenal-facing; that stretch reads VSSDTSDPLYWLRMMMASNRGT. The helical transmembrane segment at 77–97 threads the bilayer; sequence LMELGITPIISSGMVFQLLAG. The Cytoplasmic segment spans residues 98-119; that stretch reads THMIDVNLDLKADRELYQTAQK. The chain crosses the membrane as a helical span at residues 120–140; that stretch reads LFAVILSIGTATVYVFTGLYG. Residues 141–146 lie on the Lumenal side of the membrane; sequence PPSDLG. A helical membrane pass occupies residues 147–167; sequence AGIVFLLILQLVVAGMIVILL. The Cytoplasmic segment spans residues 168–246; the sequence is DELLQKGYGL…YRQNLPNIMN (79 aa). Residues 247-267 form a helical membrane-spanning segment; the sequence is LLATLVVFAAVIYLQGFRVEI. At 268 to 361 the chain is on the lumenal side; sequence PVKSSRQRGA…KDALLDPIHT (94 aa). A helical transmembrane segment spans residues 362–382; sequence AVYIAYMLTACAVFSKTWIEV. At 383–415 the chain is on the cytoplasmic side; that stretch reads SGSSPRDVAKQLKDQGLVMAGHREQSMYKELKR. Residues 416–434 traverse the membrane as a helical segment; that stretch reads IIPTAAAFGGACIGALSVA. Residues 435 to 440 lie on the Lumenal side of the membrane; sequence SDLMGA. Residues 441-458 traverse the membrane as a helical segment; sequence LGSGTGTLLAVTIIYGYF. Over 459–476 the chain is Cytoplasmic; sequence EIAAKEGDLQGMKGMIMG.

It belongs to the SecY/SEC61-alpha family. As to quaternary structure, heterotrimeric complex composed of SEC61-alpha, SEC61-beta and SEC61-gamma.

It localises to the endoplasmic reticulum membrane. Appears to play a crucial role in the insertion of secretory and membrane polypeptides into the ER. It is required for assembly of membrane and secretory proteins and is essential for cell growth. It interacts with other membrane proteins required for protein translocation. Upon binding to SEC62/63 complex, secretory precursor polypeptides may engage SEC61 to begin membrane penetration event. A cycle of assembly and disassembly of SEC62/63 from SEC61 may govern the activity of the translocase. The chain is Protein transport protein SEC61 subunit alpha (sec-61) from Neurospora crassa (strain ATCC 24698 / 74-OR23-1A / CBS 708.71 / DSM 1257 / FGSC 987).